The chain runs to 207 residues: dITP/XTP pyrophosphatase (207 aa).

11–16 contributes to the substrate binding site; it reads TGNPGK. The active-site Proton acceptor is D72. Residue D72 participates in Mg(2+) binding. Residues S73, 154-157, K177, and 182-183 each bind substrate; these read FGYD and HR.

The protein belongs to the HAM1 NTPase family. In terms of assembly, homodimer. It depends on Mg(2+) as a cofactor.

It catalyses the reaction XTP + H2O = XMP + diphosphate + H(+). It carries out the reaction dITP + H2O = dIMP + diphosphate + H(+). The catalysed reaction is ITP + H2O = IMP + diphosphate + H(+). In terms of biological role, pyrophosphatase that catalyzes the hydrolysis of nucleoside triphosphates to their monophosphate derivatives, with a high preference for the non-canonical purine nucleotides XTP (xanthosine triphosphate), dITP (deoxyinosine triphosphate) and ITP. Seems to function as a house-cleaning enzyme that removes non-canonical purine nucleotides from the nucleotide pool, thus preventing their incorporation into DNA/RNA and avoiding chromosomal lesions. The sequence is that of dITP/XTP pyrophosphatase from Thermus thermophilus (strain ATCC BAA-163 / DSM 7039 / HB27).